Reading from the N-terminus, the 329-residue chain is UDP-3-O-acylglucosamine N-acyltransferase (329 aa).

Catalysis depends on His224, which acts as the Proton acceptor.

It belongs to the transferase hexapeptide repeat family. LpxD subfamily. In terms of assembly, homotrimer.

It catalyses the reaction a UDP-3-O-[(3R)-3-hydroxyacyl]-alpha-D-glucosamine + a (3R)-hydroxyacyl-[ACP] = a UDP-2-N,3-O-bis[(3R)-3-hydroxyacyl]-alpha-D-glucosamine + holo-[ACP] + H(+). It functions in the pathway bacterial outer membrane biogenesis; LPS lipid A biosynthesis. Functionally, catalyzes the N-acylation of UDP-3-O-acylglucosamine using 3-hydroxyacyl-ACP as the acyl donor. Is involved in the biosynthesis of lipid A, a phosphorylated glycolipid that anchors the lipopolysaccharide to the outer membrane of the cell. This Albidiferax ferrireducens (strain ATCC BAA-621 / DSM 15236 / T118) (Rhodoferax ferrireducens) protein is UDP-3-O-acylglucosamine N-acyltransferase.